We begin with the raw amino-acid sequence, 436 residues long: GTPase Der (436 aa).

EngA-type G domains follow at residues 4 to 167 (PVVA…PKRG) and 176 to 351 (IKFC…ENHA). GTP contacts are provided by residues 10 to 17 (GRPNVGKS), 57 to 61 (DTGGI), 119 to 122 (NKID), 182 to 189 (GRPNVGKS), 229 to 233 (DTAGM), and 294 to 297 (NKWD). The KH-like domain maps to 352–436 (MRVQTNVLNE…PIKIIARPRK (85 aa)).

This sequence belongs to the TRAFAC class TrmE-Era-EngA-EngB-Septin-like GTPase superfamily. EngA (Der) GTPase family. As to quaternary structure, associates with the 50S ribosomal subunit.

Its function is as follows. GTPase that plays an essential role in the late steps of ribosome biogenesis. The sequence is that of GTPase Der from Geobacillus sp. (strain WCH70).